A 490-amino-acid polypeptide reads, in one-letter code: Velvet complex subunit 2 (490 aa).

Disordered regions lie at residues L23–Q148 and Y295–P316. Residues P54–Q70 show a composition bias toward basic residues. Positions A112–D131 are enriched in basic and acidic residues. Positions A164–R474 constitute a Velvet domain. The segment covering Y295 to T313 has biased composition (polar residues).

It belongs to the velvet family. VelB subfamily. Component of the heterotrimeric velvet complex composed of LAE1, VEL1 and VEL2; VEL1 acting as a bridging protein between LAE1 and VEL2. Forms a heterodimeric complex with VOS1; the formation of the VEL2-VOS1 complex is light-dependent.

The protein localises to the nucleus. It is found in the cytoplasm. Component of the velvet transcription factor complex that controls sexual/asexual developmental ratio in response to light, promoting sexual development in the darkness while stimulating asexual sporulation under illumination. The velvet complex acts as a global regulator for secondary metabolite gene expression. Component of the VEL2-VOS1 heterodimeric complex that plays a dual role in activating genes associated with spore maturation and repressing certain development-associated genes. The VEL2-VOS1 complex binds DNA through the DNA-binding domain of VOS1 that recognizes an 11-nucleotide consensus sequence 5'-CTGGCCGCGGC-3' consisting of two motifs in the promoters of key developmental regulatory genes. Regulates expression of cellulase-encoding genes such as the cellobiohydrolase-encoding genes cbh1 and cbh2, the endo-beta-1,4-glucanase-encoding genes egl1 and egl2, and the beta-glucosidase-encoding gene bgl1. The polypeptide is Velvet complex subunit 2 (Hypocrea jecorina (strain QM6a) (Trichoderma reesei)).